Consider the following 140-residue polypeptide: Endoribonuclease YbeY (140 aa).

3 residues coordinate Zn(2+): His-100, His-104, and His-110.

This sequence belongs to the endoribonuclease YbeY family. Zn(2+) serves as cofactor.

It localises to the cytoplasm. In terms of biological role, single strand-specific metallo-endoribonuclease involved in late-stage 70S ribosome quality control and in maturation of the 3' terminus of the 16S rRNA. This Helicobacter pylori (strain P12) protein is Endoribonuclease YbeY.